Reading from the N-terminus, the 410-residue chain is Peptidase T (410 aa).

Residue histidine 78 participates in Zn(2+) binding. Residue aspartate 80 is part of the active site. Aspartate 139 contributes to the Zn(2+) binding site. Glutamate 173 functions as the Proton acceptor in the catalytic mechanism. The Zn(2+) site is built by glutamate 174, aspartate 196, and histidine 378.

The protein belongs to the peptidase M20B family. Requires Zn(2+) as cofactor.

It localises to the cytoplasm. It catalyses the reaction Release of the N-terminal residue from a tripeptide.. Its function is as follows. Cleaves the N-terminal amino acid of tripeptides. This Shewanella woodyi (strain ATCC 51908 / MS32) protein is Peptidase T.